Reading from the N-terminus, the 728-residue chain is Catalase B (728 aa).

Catalysis depends on residues His107 and Asn180. Tyr394 contacts heme.

This sequence belongs to the catalase family. The cofactor is heme.

The protein resides in the secreted. The catalysed reaction is 2 H2O2 = O2 + 2 H2O. Occurs in almost all aerobically respiring organisms and serves to protect cells from the toxic effects of hydrogen peroxide. The chain is Catalase B (CATB) from Ajellomyces capsulatus (Darling's disease fungus).